A 325-amino-acid polypeptide reads, in one-letter code: MANLIDNTARSAASDARAARHPEKQKRADTPVLRKPDWIRVKAPLGKTFSETQKIVKDGGLVTVCEEAGCPNIGECWEQKHATFMILGDTCTRACSFCNVKTGLPAAVDTDEPRRVAEAVAQMGLNHVVITSVDRDDLDDGGAQHFVDVIEAIRAATPSTTIEILTPDFLRKPGAAEAVIDARPDVFNHNLETVPRLYLSIRPGARYFHSLRLLERVKDRDPAQFTKSGIMVGLGESKEEVMQVMDDMRSAGIDFLTIGQYLQPTRKHAAVDRFVHPDEFKAYETIARAKGFLMVSATPLTRSSHHAGDDFAKLRAAREQMMARG.

The tract at residues 1-31 is disordered; the sequence is MANLIDNTARSAASDARAARHPEKQKRADTP. A compositionally biased stretch (basic and acidic residues) spans 17 to 31; that stretch reads RAARHPEKQKRADTP. [4Fe-4S] cluster-binding residues include Cys65, Cys70, Cys76, Cys91, Cys95, Cys98, and Ser304. Residues 77–293 form the Radical SAM core domain; that stretch reads WEQKHATFMI…ETIARAKGFL (217 aa).

It belongs to the radical SAM superfamily. Lipoyl synthase family. The cofactor is [4Fe-4S] cluster.

Its subcellular location is the cytoplasm. It catalyses the reaction [[Fe-S] cluster scaffold protein carrying a second [4Fe-4S](2+) cluster] + N(6)-octanoyl-L-lysyl-[protein] + 2 oxidized [2Fe-2S]-[ferredoxin] + 2 S-adenosyl-L-methionine + 4 H(+) = [[Fe-S] cluster scaffold protein] + N(6)-[(R)-dihydrolipoyl]-L-lysyl-[protein] + 4 Fe(3+) + 2 hydrogen sulfide + 2 5'-deoxyadenosine + 2 L-methionine + 2 reduced [2Fe-2S]-[ferredoxin]. It functions in the pathway protein modification; protein lipoylation via endogenous pathway; protein N(6)-(lipoyl)lysine from octanoyl-[acyl-carrier-protein]: step 2/2. Its function is as follows. Catalyzes the radical-mediated insertion of two sulfur atoms into the C-6 and C-8 positions of the octanoyl moiety bound to the lipoyl domains of lipoate-dependent enzymes, thereby converting the octanoylated domains into lipoylated derivatives. This is Lipoyl synthase from Maricaulis maris (strain MCS10) (Caulobacter maris).